Here is a 209-residue protein sequence, read N- to C-terminus: Peptide deformylase 2 (209 aa).

Fe cation is bound by residues cysteine 101 and histidine 149. Residue glutamate 150 is part of the active site. Residue histidine 153 coordinates Fe cation.

Belongs to the polypeptide deformylase family. Requires Fe(2+) as cofactor.

The enzyme catalyses N-terminal N-formyl-L-methionyl-[peptide] + H2O = N-terminal L-methionyl-[peptide] + formate. In terms of biological role, removes the formyl group from the N-terminal Met of newly synthesized proteins. Requires at least a dipeptide for an efficient rate of reaction. N-terminal L-methionine is a prerequisite for activity but the enzyme has broad specificity at other positions. The chain is Peptide deformylase 2 from Coxiella burnetii (strain RSA 493 / Nine Mile phase I).